Consider the following 147-residue polypeptide: Hemoglobin subunit beta (147 aa).

An N-acetylvaline modification is found at Val2. Residues 3-147 (HLSGDEKNAV…VANALAHRYH (145 aa)) enclose the Globin domain. Ser45 is modified (phosphoserine). At Lys60 the chain carries N6-acetyllysine. His64 is a heme b binding site. An N6-acetyllysine modification is found at Lys83. His93 provides a ligand contact to heme b. Position 94 is an S-nitrosocysteine (Cys94).

It belongs to the globin family. In terms of assembly, heterotetramer of two alpha chains and two beta chains. As to expression, red blood cells.

In terms of biological role, involved in oxygen transport from the lung to the various peripheral tissues. The sequence is that of Hemoglobin subunit beta (HBB) from Camelus dromedarius (Dromedary).